Consider the following 352-residue polypeptide: Uroporphyrinogen decarboxylase (352 aa).

Substrate is bound by residues 26–30 (RQAGR), Asp76, Tyr153, Ser208, and His323.

The protein belongs to the uroporphyrinogen decarboxylase family. Homodimer.

It is found in the cytoplasm. It catalyses the reaction uroporphyrinogen III + 4 H(+) = coproporphyrinogen III + 4 CO2. It participates in porphyrin-containing compound metabolism; protoporphyrin-IX biosynthesis; coproporphyrinogen-III from 5-aminolevulinate: step 4/4. Its function is as follows. Catalyzes the decarboxylation of four acetate groups of uroporphyrinogen-III to yield coproporphyrinogen-III. The protein is Uroporphyrinogen decarboxylase of Prochlorococcus marinus (strain NATL2A).